Reading from the N-terminus, the 297-residue chain is Lymphocyte antigen 6 complex locus protein G6f (297 aa).

A signal peptide spans 1–16 (MAVLFLLLFLCGTPQA). One can recognise an Ig-like V-type domain in the interval 17–122 (ADNMQAIYVA…HNYQNWRVYD (106 aa)). The Extracellular segment spans residues 17 to 235 (ADNMQAIYVA…APSTGWDMPW (219 aa)). A disulfide bond links cysteine 35 and cysteine 106. Residue asparagine 88 is glycosylated (N-linked (GlcNAc...) asparagine). The helical transmembrane segment at 236–256 (ILMLLLTMGQGVVILALSIVL) threads the bilayer. Residues 257-297 (WRQRVRGAPGRDASIPQFKPEIQVYENIHLARLGPPAHKPR) are Cytoplasmic-facing. Tyrosine 281 is modified (phosphotyrosine).

In terms of assembly, homodimer; disulfide-linked. Interacts with GRB2 and GRB7 in a phosphorylation-dependent manner. In terms of processing, N-glycosylated.

The protein localises to the cell membrane. Its function is as follows. May play a role in the downstream signal transduction pathways involving GRB2 and GRB7. This is Lymphocyte antigen 6 complex locus protein G6f (LY6G6F) from Homo sapiens (Human).